The chain runs to 274 residues: Acetyl-coenzyme A carboxylase carboxyl transferase subunit beta (274 aa).

The 257-residue stretch at 18–274 folds into the CoA carboxyltransferase N-terminal domain; it reads IWTKCKKCDY…FYNRQCFLKF (257 aa). Zn(2+) contacts are provided by C22, C25, C41, and C44. The C4-type zinc finger occupies 22 to 44; that stretch reads CKKCDYILLQKDFEENLMVCPKC.

It belongs to the AccD/PCCB family. Acetyl-CoA carboxylase is a heterohexamer composed of biotin carboxyl carrier protein (AccB), biotin carboxylase (AccC) and two subunits each of ACCase subunit alpha (AccA) and ACCase subunit beta (AccD). It depends on Zn(2+) as a cofactor.

Its subcellular location is the cytoplasm. The catalysed reaction is N(6)-carboxybiotinyl-L-lysyl-[protein] + acetyl-CoA = N(6)-biotinyl-L-lysyl-[protein] + malonyl-CoA. It participates in lipid metabolism; malonyl-CoA biosynthesis; malonyl-CoA from acetyl-CoA: step 1/1. Functionally, component of the acetyl coenzyme A carboxylase (ACC) complex. Biotin carboxylase (BC) catalyzes the carboxylation of biotin on its carrier protein (BCCP) and then the CO(2) group is transferred by the transcarboxylase to acetyl-CoA to form malonyl-CoA. The polypeptide is Acetyl-coenzyme A carboxylase carboxyl transferase subunit beta (Endomicrobium trichonymphae).